Reading from the N-terminus, the 64-residue chain is Toxin Tce3 (64 aa).

One can recognise an LCN-type CS-alpha/beta domain in the interval 1–62 (KDGYIIEHRG…IFDSNNNKCS (62 aa)). Cystine bridges form between cysteine 11/cysteine 61, cysteine 15/cysteine 37, cysteine 23/cysteine 42, and cysteine 27/cysteine 44.

Belongs to the long (4 C-C) scorpion toxin superfamily. Sodium channel inhibitor family. Beta subfamily. Expressed by the venom gland.

It localises to the secreted. Functionally, inhibits the sodium (Nav) currents in an apparent irreversible manner. Produces small depolarization and induces repetitive firing in squid axons. Is specific for arthropods (crickets, triatomides, crabs and squids), but is non-toxic to mice. Shows antibacterial activity against both Gram-positive and Gram-negative bacteria. The chain is Toxin Tce3 from Tityus cerroazul (Scorpion).